Here is a 185-residue protein sequence, read N- to C-terminus: Elongation factor P (185 aa).

It belongs to the elongation factor P family.

It is found in the cytoplasm. The protein operates within protein biosynthesis; polypeptide chain elongation. Functionally, involved in peptide bond synthesis. Stimulates efficient translation and peptide-bond synthesis on native or reconstituted 70S ribosomes in vitro. Probably functions indirectly by altering the affinity of the ribosome for aminoacyl-tRNA, thus increasing their reactivity as acceptors for peptidyl transferase. This Streptococcus uberis (strain ATCC BAA-854 / 0140J) protein is Elongation factor P.